We begin with the raw amino-acid sequence, 30 residues long: U5-ctenitoxin-Pk1b (30 aa).

Cystine bridges form between Cys6/Cys23 and Cys13/Cys29.

This sequence belongs to the neurotoxin 04 (omega-agtx) family. 02 (Tx1) subfamily. In terms of tissue distribution, expressed by the venom gland.

The protein localises to the secreted. In terms of biological role, lethal neurotoxin. Causes spastic paralysis and death in mice in 4-6 minutes after intracerebroventricular injection at dose levels of 1.5 ug per mouse. This chain is U5-ctenitoxin-Pk1b, found in Phoneutria keyserlingi (Brazilian wandering spider).